A 353-amino-acid polypeptide reads, in one-letter code: Putative transport protein YrrI (353 aa).

8 helical membrane passes run 8–28 (LLLW…FFML), 37–57 (LVIK…YLLL), 77–97 (IYVL…PVLI), 165–185 (FLIA…IELM), 220–240 (LLVC…FGLP), 243–263 (LILG…PFIG), 269–289 (LIAM…VFIL), and 311–331 (VVIM…GMIL).

It belongs to the autoinducer-2 exporter (AI-2E) (TC 2.A.86) family.

The protein localises to the cell membrane. This chain is Putative transport protein YrrI (yrrI), found in Bacillus subtilis (strain 168).